A 167-amino-acid polypeptide reads, in one-letter code: GTP-dependent dephospho-CoA kinase (167 aa).

Positions 39, 41, 58, 60, and 117 each coordinate GTP.

Belongs to the GTP-dependent DPCK family.

The catalysed reaction is 3'-dephospho-CoA + GTP = GDP + CoA + H(+). It functions in the pathway cofactor biosynthesis; coenzyme A biosynthesis. In terms of biological role, catalyzes the GTP-dependent phosphorylation of the 3'-hydroxyl group of dephosphocoenzyme A to form coenzyme A (CoA). The protein is GTP-dependent dephospho-CoA kinase of Korarchaeum cryptofilum (strain OPF8).